The sequence spans 130 residues: uncharacterized protein (130 aa).

This is an uncharacterized protein from Pyrococcus horikoshii (strain ATCC 700860 / DSM 12428 / JCM 9974 / NBRC 100139 / OT-3).